The following is a 269-amino-acid chain: Formamidopyrimidine-DNA glycosylase (269 aa).

The active-site Schiff-base intermediate with DNA is the Pro2. Glu3 serves as the catalytic Proton donor. Lys57 acts as the Proton donor; for beta-elimination activity in catalysis. DNA-binding residues include His90, Arg109, and Arg150. The FPG-type zinc finger occupies 235 to 269 (QVYGKAGEQCPNCAELIQELKIGQRNTFYCSSCQV). Arg259 functions as the Proton donor; for delta-elimination activity in the catalytic mechanism.

The protein belongs to the FPG family. In terms of assembly, monomer. It depends on Zn(2+) as a cofactor.

It carries out the reaction Hydrolysis of DNA containing ring-opened 7-methylguanine residues, releasing 2,6-diamino-4-hydroxy-5-(N-methyl)formamidopyrimidine.. It catalyses the reaction 2'-deoxyribonucleotide-(2'-deoxyribose 5'-phosphate)-2'-deoxyribonucleotide-DNA = a 3'-end 2'-deoxyribonucleotide-(2,3-dehydro-2,3-deoxyribose 5'-phosphate)-DNA + a 5'-end 5'-phospho-2'-deoxyribonucleoside-DNA + H(+). Functionally, involved in base excision repair of DNA damaged by oxidation or by mutagenic agents. Acts as a DNA glycosylase that recognizes and removes damaged bases. Has a preference for oxidized purines, such as 7,8-dihydro-8-oxoguanine (8-oxoG). Has AP (apurinic/apyrimidinic) lyase activity and introduces nicks in the DNA strand. Cleaves the DNA backbone by beta-delta elimination to generate a single-strand break at the site of the removed base with both 3'- and 5'-phosphates. The chain is Formamidopyrimidine-DNA glycosylase from Vibrio atlanticus (strain LGP32) (Vibrio splendidus (strain Mel32)).